A 180-amino-acid polypeptide reads, in one-letter code: ATP-dependent protease subunit HslV (180 aa).

Residue Thr6 is part of the active site. Residues Ala164, Cys167, and Thr170 each coordinate Na(+).

This sequence belongs to the peptidase T1B family. HslV subfamily. As to quaternary structure, a double ring-shaped homohexamer of HslV is capped on each side by a ring-shaped HslU homohexamer. The assembly of the HslU/HslV complex is dependent on binding of ATP.

The protein resides in the cytoplasm. The catalysed reaction is ATP-dependent cleavage of peptide bonds with broad specificity.. With respect to regulation, allosterically activated by HslU binding. In terms of biological role, protease subunit of a proteasome-like degradation complex believed to be a general protein degrading machinery. The chain is ATP-dependent protease subunit HslV from Borrelia duttonii (strain Ly).